The chain runs to 515 residues: RNA exonuclease NGL2 (515 aa).

2 disordered regions span residues 1–54 (MTQD…SKPI) and 353–381 (RDGE…PVPE). Basic and acidic residues predominate over residues 21-34 (EINKSVKDAKHQTN). Basic residues predominate over residues 40-52 (QHKKKGKKGKKSK). Residues 369–381 (KYGKDQPESPVPE) are compositionally biased toward basic and acidic residues.

This sequence belongs to the CCR4/nocturin family.

It is found in the cytoplasm. The protein localises to the nucleus. Functionally, involved in pre-rRNA processing. Required for the final stage of 3'-end maturation of 5.8S rRNA at site E. This Saccharomyces cerevisiae (strain ATCC 204508 / S288c) (Baker's yeast) protein is RNA exonuclease NGL2 (NGL2).